The primary structure comprises 671 residues: tRNA(Met) cytidine acetyltransferase TmcA (671 aa).

Residues Gln180, 202-211 (GRGKSALAGQ), and Arg319 contribute to the ATP site. The N-acetyltransferase domain occupies 356–531 (QTLWRSEPET…SGCYTAMALL (176 aa)). Acetyl-CoA-binding positions include 461–463 (IAV), 468–474 (QREGTGR), Glu499, and Arg506.

Belongs to the RNA cytidine acetyltransferase family. TmcA subfamily.

Its subcellular location is the cytoplasm. The catalysed reaction is cytidine(34) in elongator tRNA(Met) + acetyl-CoA + ATP + H2O = N(4)-acetylcytidine(34) in elongator tRNA(Met) + ADP + phosphate + CoA + H(+). Catalyzes the formation of N(4)-acetylcytidine (ac(4)C) at the wobble position of tRNA(Met), by using acetyl-CoA as an acetyl donor and ATP (or GTP). This is tRNA(Met) cytidine acetyltransferase TmcA from Shigella flexneri serotype 5b (strain 8401).